Reading from the N-terminus, the 585-residue chain is Sodium/calcium exchanger NCL (585 aa).

Helical transmembrane passes span 83 to 103 (VFLI…LSAG), 106 to 126 (LLLE…MLGA), 149 to 169 (VSVG…VIWG), 212 to 232 (IMAI…LGST), and 239 to 259 (VLIA…YQVF). EF-hand domains follow at residues 299–334 (PDEH…ISFE) and 339–374 (DKDD…WLIQ). Residues Asp-312, Asn-314, Asp-316, His-318, Glu-323, Asp-352, Asp-356, Gln-358, and Glu-363 each contribute to the Ca(2+) site. 2 helical membrane-spanning segments follow: residues 427–447 (WITI…AAFA) and 457–477 (FSAA…PLAT). Asn-478 carries an N-linked (GlcNAc...) asparagine glycan. A run of 3 helical transmembrane segments spans residues 505 to 525 (CGGV…IVYV), 532 to 552 (FSSE…FASF), and 558 to 578 (LWTC…VYIL).

This sequence belongs to the Ca(2+):cation antiporter (CaCA) (TC 2.A.19) family. In terms of tissue distribution, expressed in roots, leaves, stems, petals, stamens, ovules and siliques.

The protein localises to the cell membrane. The protein resides in the vacuole membrane. Functionally, possesses sodium/calcium exchanger (NCX) activity when expressed in a heterologous mammalian CHO-K1 cell system. Does not possess cation/proton exchanger (CAX) or sodium/proton (NHX) activity when expressed in a heterologous yeast cell system. Has the ability to bind calcium in vitro. Participates in the maintenance of calcium homeostasis. May play a role in auxin response, diurnal rhythm and flowering time. Involved in salt stress response. The sequence is that of Sodium/calcium exchanger NCL from Arabidopsis thaliana (Mouse-ear cress).